The following is a 62-amino-acid chain: uncharacterized protein (62 aa).

The protein localises to the plastid. Its subcellular location is the chloroplast. This is an uncharacterized protein from Guillardia theta (Cryptophyte).